Consider the following 117-residue polypeptide: Mitochondrial zinc maintenance protein 1, mitochondrial (117 aa).

The transit peptide at 1 to 10 directs the protein to the mitochondrion; the sequence is MSSVLSAYRN. A disordered region spans residues 98–117; the sequence is RKEMGSLAGKKGSSIKSCND.

It belongs to the complex I LYR family. MZM1 subfamily. Interacts with RIP1.

Its subcellular location is the mitochondrion matrix. Its function is as follows. Assembly factor required for Rieske Fe-S protein RIP1 incorporation into the cytochrome b-c1 (CIII) complex. Functions as a chaperone, binding to this subunit within the mitochondrial matrix and stabilizing it prior to its translocation and insertion into the late CIII dimeric intermediate within the mitochondrial inner membrane. Modulates the mitochondrial matrix zinc pool. This is Mitochondrial zinc maintenance protein 1, mitochondrial (MZM1) from Candida albicans (strain SC5314 / ATCC MYA-2876) (Yeast).